A 420-amino-acid chain; its full sequence is MTSTQAIFEKVQKVKKTINTATTAEKNLALEEMAKQLLISRADILAANELDMTAAKGKISDVMLDRLYLDEERIAAMAEGIRQLIDLEDPVGQVLERTKLDNGLVISKKRVAMGVIGIIYESRPNVTSDAAALALKSGNAVVLRSGKDAYQTALAIVTALKKGLAQTKISPDCIQLVSDTSRASAQAMMKAKGYLDLLIPRGGAGLIQAVVENATVPVIETGTGIVHVYVDKDADQDKALAIIENAKTSRPSVCNAMEVLLVHEEIAAAFLPRLQKILVTDRDAAREKTVELRLDEKAAQYISGSKARPEDFDTEFLDYVLAVKLVSSLEEAVEHIEAHSTHHSDAIVTENDAAAAYFTEQVDSAAVYVNASTRFTDGGQFGLGCEMGISTQKLHARGPMGLKELSSYKYVIQGTGQVRK.

This sequence belongs to the gamma-glutamyl phosphate reductase family.

Its subcellular location is the cytoplasm. It catalyses the reaction L-glutamate 5-semialdehyde + phosphate + NADP(+) = L-glutamyl 5-phosphate + NADPH + H(+). It functions in the pathway amino-acid biosynthesis; L-proline biosynthesis; L-glutamate 5-semialdehyde from L-glutamate: step 2/2. In terms of biological role, catalyzes the NADPH-dependent reduction of L-glutamate 5-phosphate into L-glutamate 5-semialdehyde and phosphate. The product spontaneously undergoes cyclization to form 1-pyrroline-5-carboxylate. The polypeptide is Gamma-glutamyl phosphate reductase (Streptococcus gordonii (strain Challis / ATCC 35105 / BCRC 15272 / CH1 / DL1 / V288)).